The primary structure comprises 440 residues: Proline--tRNA ligase (440 aa).

Belongs to the class-II aminoacyl-tRNA synthetase family. ProS type 2 subfamily. Homodimer.

Its subcellular location is the cytoplasm. The enzyme catalyses tRNA(Pro) + L-proline + ATP = L-prolyl-tRNA(Pro) + AMP + diphosphate. Its function is as follows. Catalyzes the attachment of proline to tRNA(Pro) in a two-step reaction: proline is first activated by ATP to form Pro-AMP and then transferred to the acceptor end of tRNA(Pro). The chain is Proline--tRNA ligase from Azorhizobium caulinodans (strain ATCC 43989 / DSM 5975 / JCM 20966 / LMG 6465 / NBRC 14845 / NCIMB 13405 / ORS 571).